A 444-amino-acid chain; its full sequence is Tol-Pal system protein TolB (444 aa).

The first 19 residues, 1-19 (MRNIIYFILSLLFSVTSYA), serve as a signal peptide directing secretion.

The protein belongs to the TolB family. In terms of assembly, the Tol-Pal system is composed of five core proteins: the inner membrane proteins TolA, TolQ and TolR, the periplasmic protein TolB and the outer membrane protein Pal. They form a network linking the inner and outer membranes and the peptidoglycan layer.

Its subcellular location is the periplasm. Functionally, part of the Tol-Pal system, which plays a role in outer membrane invagination during cell division and is important for maintaining outer membrane integrity. The polypeptide is Tol-Pal system protein TolB (Rickettsia peacockii (strain Rustic)).